The chain runs to 612 residues: Calcium-dependent protein kinase 27 (612 aa).

Gly-2 carries N-myristoyl glycine lipidation. A disordered region spans residues 23 to 132 (PRHAAPSSPS…AHIKRISSAG (110 aa)). The span at 28–50 (PSSPSQPTTTSRSIPVVLPSAPS) shows a compositional bias: low complexity. Residues 51 to 100 (SKPPPPTQTAPPVPVVISEPPPPQPQPEPQPAAPSQPPPPQEQPSPPPPA) show a composition bias toward pro residues. A compositionally biased stretch (basic residues) spans 117–127 (SRAKKPAHIKR). In terms of domain architecture, Protein kinase spans 150–408 (YSLGRKLGQG…AHEVLCHPWL (259 aa)). ATP is bound by residues 156–164 (LGQGQFGTT) and Lys-179. The active-site Proton acceptor is Asp-274. Residues 414 to 444 (APDKPLDSAVLSRLRQFSAMNKLKKMALRVI) form an autoinhibitory domain region. 4 consecutive EF-hand domains span residues 451 to 486 (EEIA…VGAN), 487 to 522 (MKES…LNKV), 523 to 558 (ERED…FGIE), and 561 to 592 (RLED…TTTG). Residues Asp-464, Asp-466, Ser-468, Gln-470, Glu-475, Asp-500, Asp-502, Ser-504, Thr-506, Glu-511, Asp-536, Asp-538, Ser-540, Tyr-542, Glu-547, Asp-570, Asp-572, Asp-574, Arg-576, and Glu-581 each coordinate Ca(2+).

The protein belongs to the protein kinase superfamily. Ser/Thr protein kinase family. CDPK subfamily.

The protein localises to the membrane. The catalysed reaction is L-seryl-[protein] + ATP = O-phospho-L-seryl-[protein] + ADP + H(+). It catalyses the reaction L-threonyl-[protein] + ATP = O-phospho-L-threonyl-[protein] + ADP + H(+). Activated by calcium. Autophosphorylation may play an important role in the regulation of the kinase activity. May play a role in signal transduction pathways that involve calcium as a second messenger. This is Calcium-dependent protein kinase 27 from Oryza sativa subsp. japonica (Rice).